A 74-amino-acid chain; its full sequence is Large ribosomal subunit protein bL31 (74 aa).

Cysteine 16, cysteine 18, cysteine 38, and cysteine 41 together coordinate Zn(2+).

This sequence belongs to the bacterial ribosomal protein bL31 family. Type A subfamily. In terms of assembly, part of the 50S ribosomal subunit. Zn(2+) is required as a cofactor.

Functionally, binds the 23S rRNA. The sequence is that of Large ribosomal subunit protein bL31 from Salinispora tropica (strain ATCC BAA-916 / DSM 44818 / JCM 13857 / NBRC 105044 / CNB-440).